Consider the following 286-residue polypeptide: Thymidylate synthase (286 aa).

Residue 140–141 coordinates dUMP; sequence RR. Residue cysteine 161 is the Nucleophile of the active site. DUMP-binding positions include 185–188, asparagine 196, and 226–228; these read RSND and HIY. (6R)-5,10-methylene-5,6,7,8-tetrahydrofolate is bound at residue aspartate 188. Residue alanine 285 coordinates (6R)-5,10-methylene-5,6,7,8-tetrahydrofolate.

This sequence belongs to the thymidylate synthase family. Bacterial-type ThyA subfamily. In terms of assembly, homodimer.

It is found in the cytoplasm. It catalyses the reaction dUMP + (6R)-5,10-methylene-5,6,7,8-tetrahydrofolate = 7,8-dihydrofolate + dTMP. It participates in pyrimidine metabolism; dTTP biosynthesis. Its function is as follows. Catalyzes the reductive methylation of 2'-deoxyuridine-5'-monophosphate (dUMP) to 2'-deoxythymidine-5'-monophosphate (dTMP) while utilizing 5,10-methylenetetrahydrofolate (mTHF) as the methyl donor and reductant in the reaction, yielding dihydrofolate (DHF) as a by-product. This enzymatic reaction provides an intracellular de novo source of dTMP, an essential precursor for DNA biosynthesis. This Streptococcus thermophilus (strain ATCC BAA-491 / LMD-9) protein is Thymidylate synthase.